The sequence spans 192 residues: Ribosomal RNA small subunit methyltransferase G (192 aa).

Residues G63, L68, I112 to E113, and R125 contribute to the S-adenosyl-L-methionine site.

This sequence belongs to the methyltransferase superfamily. RNA methyltransferase RsmG family.

It localises to the cytoplasm. It carries out the reaction guanosine(527) in 16S rRNA + S-adenosyl-L-methionine = N(7)-methylguanosine(527) in 16S rRNA + S-adenosyl-L-homocysteine. In terms of biological role, specifically methylates the N7 position of guanine in position 527 of 16S rRNA. This chain is Ribosomal RNA small subunit methyltransferase G, found in Rickettsia africae (strain ESF-5).